A 470-amino-acid polypeptide reads, in one-letter code: UDP-glycosyltransferase 72D1 (470 aa).

UDP-alpha-D-glucose is bound by residues Ser276, 343–345 (APQ), 360–368 (HCGWSSALE), and 382–385 (YAEQ).

This sequence belongs to the UDP-glycosyltransferase family.

In Arabidopsis thaliana (Mouse-ear cress), this protein is UDP-glycosyltransferase 72D1 (UGT72D1).